We begin with the raw amino-acid sequence, 282 residues long: Undecaprenyl-diphosphatase (282 aa).

Helical transmembrane passes span 39-59 (PGAA…LIYF), 85-105 (ATMG…GLLF), 115-135 (SLYW…LTEV), 153-173 (IGWK…IPGS), 196-216 (FSFL…LYET), 230-250 (LLVA…FLIT), and 260-280 (FIIY…TGAI).

Belongs to the UppP family.

It localises to the cell inner membrane. The catalysed reaction is di-trans,octa-cis-undecaprenyl diphosphate + H2O = di-trans,octa-cis-undecaprenyl phosphate + phosphate + H(+). Catalyzes the dephosphorylation of undecaprenyl diphosphate (UPP). Confers resistance to bacitracin. This chain is Undecaprenyl-diphosphatase, found in Chlorobium chlorochromatii (strain CaD3).